Reading from the N-terminus, the 91-residue chain is Histone H1, sperm (91 aa).

Residues proline 1 to methionine 25 form a disordered region. The span at alanine 9–proline 20 shows a compositional bias: basic residues. Residues glycine 18–glycine 91 form the H15 domain.

This sequence belongs to the histone H1/H5 family.

It is found in the nucleus. It localises to the chromosome. Histones H1 are necessary for the condensation of nucleosome chains into higher-order structures. This is Histone H1, sperm from Sphaerechinus granularis (Purple sea urchin).